Reading from the N-terminus, the 969-residue chain is Translation initiation factor IF-2 (969 aa).

The interval serine 50–leucine 370 is disordered. Over residues lysine 54–threonine 76 the composition is skewed to low complexity. Over residues proline 77–proline 87 the composition is skewed to pro residues. The segment covering alanine 88–alanine 102 has biased composition (low complexity). Residues alanine 112 to proline 124 show a composition bias toward pro residues. Over residues alanine 125–glycine 164 the composition is skewed to low complexity. A compositionally biased stretch (pro residues) spans proline 240–glycine 267. Gly residues predominate over residues serine 269 to glycine 340. Residues arginine 344–lysine 353 show a composition bias toward basic residues. Residues valine 465–leucine 636 enclose the tr-type G domain. The interval glycine 474–threonine 481 is G1. GTP is bound at residue glycine 474 to threonine 481. The G2 stretch occupies residues glycine 499 to histidine 503. The interval aspartate 524 to glycine 527 is G3. GTP contacts are provided by residues aspartate 524–histidine 528 and asparagine 578–aspartate 581. Residues asparagine 578–aspartate 581 form a G4 region. The tract at residues serine 614–lysine 616 is G5.

Belongs to the TRAFAC class translation factor GTPase superfamily. Classic translation factor GTPase family. IF-2 subfamily.

It is found in the cytoplasm. In terms of biological role, one of the essential components for the initiation of protein synthesis. Protects formylmethionyl-tRNA from spontaneous hydrolysis and promotes its binding to the 30S ribosomal subunits. Also involved in the hydrolysis of GTP during the formation of the 70S ribosomal complex. This is Translation initiation factor IF-2 from Nocardia farcinica (strain IFM 10152).